The sequence spans 383 residues: D-alanine--D-alanine ligase (383 aa).

The region spanning 164 to 373 (KLAFQAAGLE…YSALIDELIT (210 aa)) is the ATP-grasp domain. 196–251 (VAELGFPVFVKPARAGSSFGITRVDEPSQLDAAIATAREHDLKLVVEAGIDGREIE) is a binding site for ATP. Mg(2+) contacts are provided by Asp327, Glu340, and Asn342.

The protein belongs to the D-alanine--D-alanine ligase family. Mg(2+) is required as a cofactor. Requires Mn(2+) as cofactor.

It localises to the cytoplasm. It catalyses the reaction 2 D-alanine + ATP = D-alanyl-D-alanine + ADP + phosphate + H(+). It participates in cell wall biogenesis; peptidoglycan biosynthesis. Functionally, cell wall formation. The protein is D-alanine--D-alanine ligase of Kocuria rhizophila (strain ATCC 9341 / DSM 348 / NBRC 103217 / DC2201).